Here is a 201-residue protein sequence, read N- to C-terminus: Probable nicotinate-nucleotide adenylyltransferase (201 aa).

The protein belongs to the NadD family.

It catalyses the reaction nicotinate beta-D-ribonucleotide + ATP + H(+) = deamido-NAD(+) + diphosphate. Its pathway is cofactor biosynthesis; NAD(+) biosynthesis; deamido-NAD(+) from nicotinate D-ribonucleotide: step 1/1. In terms of biological role, catalyzes the reversible adenylation of nicotinate mononucleotide (NaMN) to nicotinic acid adenine dinucleotide (NaAD). This chain is Probable nicotinate-nucleotide adenylyltransferase, found in Clostridium botulinum (strain Okra / Type B1).